The sequence spans 335 residues: MTLPLLGPMSLSGFEHPWFFLFFFVVIGLVALYIVVQLARQKRMLRFANMELLESVAPKQPSRMRHLPAVLMILSLVSFTIAMAGPTHDVRIPRNRAVVMLVIDVSQSMRATDVAPNRLTAAQEAAKQFADQLTPGINLGLIAYAGTATVLVSPTTNRESTKTAIDKLQLADRTATGEGIFTALQAIATVGAVIGGGDEPPPARVVLMSDGKETVPSNPDNPKGAYTAARTAKDQGVPISTVSFGTPYGYVEINEQRQPVPVDDEMLKKIADLSGGEAFTASSLEQLKQVFTNLQEQIGYETIKGDASVGWLRLGAGVLALAALGALLINRRLPN.

Transmembrane regions (helical) follow at residues 18-38 (WFFL…VVQL) and 67-87 (LPAV…AGPT). The VWFA domain maps to 98–294 (VVMLVIDVSQ…EQLKQVFTNL (197 aa)). The helical transmembrane segment at 309–329 (VGWLRLGAGVLALAALGALLI) threads the bilayer.

The protein belongs to the UPF0353 family.

The protein resides in the cell membrane. This Mycolicibacterium gilvum (strain PYR-GCK) (Mycobacterium gilvum (strain PYR-GCK)) protein is UPF0353 protein Mflv_3659.